We begin with the raw amino-acid sequence, 249 residues long: 23S rRNA (guanosine-2'-O-)-methyltransferase RlmB (249 aa).

S-adenosyl-L-methionine-binding residues include Gly197, Ile217, and Leu226.

Belongs to the class IV-like SAM-binding methyltransferase superfamily. RNA methyltransferase TrmH family. RlmB subfamily.

Its subcellular location is the cytoplasm. It catalyses the reaction guanosine(2251) in 23S rRNA + S-adenosyl-L-methionine = 2'-O-methylguanosine(2251) in 23S rRNA + S-adenosyl-L-homocysteine + H(+). Specifically methylates the ribose of guanosine 2251 in 23S rRNA. The chain is 23S rRNA (guanosine-2'-O-)-methyltransferase RlmB from Ralstonia nicotianae (strain ATCC BAA-1114 / GMI1000) (Ralstonia solanacearum).